Reading from the N-terminus, the 28-residue chain is Grammistin Gs A (28 aa).

It belongs to the grammistin family. Group 3 subfamily. Exists as aggregates of 3-4 molecules. In terms of tissue distribution, expressed by the skin glands.

It is found in the secreted. Its function is as follows. Thanks to its amphiphilic alpha-helice(s), it may integrate into membrane phospholipids, leading to lysis of the membrane. Has no substantial hemolytic activity. Has antibacterial activity with a broad spectrum against various species of bacteria including both Gram-positive and Gram-negative groups. The protein is Grammistin Gs A of Grammistes sexlineatus (Goldenstriped soapfish).